Here is a 337-residue protein sequence, read N- to C-terminus: Methionyl-tRNA formyltransferase (337 aa).

110-113 (SLLP) is a (6S)-5,6,7,8-tetrahydrofolate binding site.

This sequence belongs to the Fmt family.

It catalyses the reaction L-methionyl-tRNA(fMet) + (6R)-10-formyltetrahydrofolate = N-formyl-L-methionyl-tRNA(fMet) + (6S)-5,6,7,8-tetrahydrofolate + H(+). Attaches a formyl group to the free amino group of methionyl-tRNA(fMet). The formyl group appears to play a dual role in the initiator identity of N-formylmethionyl-tRNA by promoting its recognition by IF2 and preventing the misappropriation of this tRNA by the elongation apparatus. The chain is Methionyl-tRNA formyltransferase from Frankia casuarinae (strain DSM 45818 / CECT 9043 / HFP020203 / CcI3).